Here is a 274-residue protein sequence, read N- to C-terminus: Penicillin-insensitive murein endopeptidase (274 aa).

An N-terminal signal peptide occupies residues 1-19 (MNKTAIALLALLASSVSLA). Disulfide bonds link cysteine 44–cysteine 265, cysteine 187–cysteine 235, and cysteine 216–cysteine 223. 6 residues coordinate Zn(2+): histidine 110, histidine 113, aspartate 120, aspartate 147, histidine 150, and histidine 211. A disordered region spans residues 227–274 (PLPPPGDGCGAELQSWFEPPKPGTTKPEKKTPPPLPPSCQALLDEHVI).

This sequence belongs to the peptidase M74 family. As to quaternary structure, dimer. It depends on Zn(2+) as a cofactor.

The protein localises to the periplasm. Functionally, murein endopeptidase that cleaves the D-alanyl-meso-2,6-diamino-pimelyl amide bond that connects peptidoglycan strands. Likely plays a role in the removal of murein from the sacculus. The protein is Penicillin-insensitive murein endopeptidase of Shigella dysenteriae serotype 1 (strain Sd197).